The following is a 262-amino-acid chain: Probable aminoglycoside 3'-phosphotransferase (262 aa).

D187 serves as the catalytic Proton acceptor.

Belongs to the aminoglycoside phosphotransferase family.

The enzyme catalyses kanamycin A + ATP = kanamycin 3'-phosphate + ADP + H(+). In Lactococcus lactis subsp. lactis (strain IL1403) (Streptococcus lactis), this protein is Probable aminoglycoside 3'-phosphotransferase (ymdC).